The primary structure comprises 514 residues: Na(+)/H(+) antiporter NhaB (514 aa).

11 helical membrane passes run 21 to 41 (LAIV…SPFI), 43 to 63 (GWLL…CYPL), 88 to 108 (IMAN…IFFM), 143 to 163 (FLDA…FYGV), 203 to 223 (LMMH…VGEP), 239 to 259 (FFLR…LTCF), 304 to 324 (ALIA…VGLI), 349 to 369 (QESL…AVII), 390 to 410 (LALF…VFVA), 448 to 468 (ATPN…SPLI), and 484 to 504 (IVLS…ATIW).

It belongs to the NhaB Na(+)/H(+) (TC 2.A.34) antiporter family.

The protein resides in the cell inner membrane. It catalyses the reaction 2 Na(+)(in) + 3 H(+)(out) = 2 Na(+)(out) + 3 H(+)(in). Functionally, na(+)/H(+) antiporter that extrudes sodium in exchange for external protons. The polypeptide is Na(+)/H(+) antiporter NhaB (Haemophilus influenzae (strain 86-028NP)).